A 499-amino-acid polypeptide reads, in one-letter code: Na(+)/H(+) antiporter NhaB (499 aa).

12 helical membrane passes run 38-58 (VSPF…LAMA), 62-82 (YPLQ…LTSA), 89-109 (VLAN…IYFM), 128-148 (LLLS…LDAL), 149-169 (TVTA…HRFA), 204-224 (LIMH…VGEP), 242-262 (LVMA…CAIL), 310-330 (VLVF…LLII), 349-369 (FEEA…VAVI), 393-413 (MFFV…VATV), 449-469 (ATPN…APLI), and 478-498 (IMAL…VILF).

This sequence belongs to the NhaB Na(+)/H(+) (TC 2.A.34) antiporter family.

Its subcellular location is the cell inner membrane. It catalyses the reaction 2 Na(+)(in) + 3 H(+)(out) = 2 Na(+)(out) + 3 H(+)(in). In terms of biological role, na(+)/H(+) antiporter that extrudes sodium in exchange for external protons. The polypeptide is Na(+)/H(+) antiporter NhaB (Saccharophagus degradans (strain 2-40 / ATCC 43961 / DSM 17024)).